The sequence spans 69 residues: Cecropin-like peptide 1 (69 aa).

The first 23 residues, 1 to 23, serve as a signal peptide directing secretion; sequence MNFTKLFVVFAVVLVAFAGQSEA. The residue at position 68 (glutamine 68) is a Glutamine amide.

In terms of tissue distribution, following bacterial infection, expressed in fat body, trachea and muscle.

The protein resides in the secreted. Antimicrobial peptide active against Gram-negative bacteria E.coli KCCM 11234 (MIC&lt;=1.03 uM), E.aerogenes KCCM 12177 (MIC&lt;=2.07 uM) and P.aeruginosa KCCM 11328 (MIC&lt;=2.07 uM). Not active against various Gram-positive bacteria at concentrations up to 4.14 uM. This Hermetia illucens (Black soldier fly) protein is Cecropin-like peptide 1.